Reading from the N-terminus, the 300-residue chain is Protein p34 (300 aa).

5 helical membrane-spanning segments follow: residues 14–34 (YLSV…WVVT), 39–59 (ILAS…NLVA), 87–107 (SIFF…SLFI), 119–139 (IIMY…TYVI), and 170–190 (LSDY…LYIF).

It belongs to the cation diffusion facilitator (CDF) transporter (TC 2.A.4) family.

It localises to the cell membrane. This Rickettsia prowazekii (strain Madrid E) protein is Protein p34 (p34).